A 238-amino-acid polypeptide reads, in one-letter code: ATP synthase subunit a (238 aa).

5 helical membrane passes run 18-38 (LTIL…VFWA), 75-95 (YSLL…LGLM), 112-132 (NFGV…IEGI), 179-199 (VVTG…PLAF), and 203-223 (IVWT…FIIL).

The protein belongs to the ATPase A chain family. F-type ATPases have 2 components, CF(1) - the catalytic core - and CF(0) - the membrane proton channel. CF(1) has five subunits: alpha(3), beta(3), gamma(1), delta(1), epsilon(1). CF(0) has three main subunits: a(1), b(2) and c(9-12). The alpha and beta chains form an alternating ring which encloses part of the gamma chain. CF(1) is attached to CF(0) by a central stalk formed by the gamma and epsilon chains, while a peripheral stalk is formed by the delta and b chains.

It localises to the cell membrane. Functionally, key component of the proton channel; it plays a direct role in the translocation of protons across the membrane. This Streptococcus agalactiae serotype III (strain NEM316) protein is ATP synthase subunit a.